Consider the following 469-residue polypeptide: Citrate synthase, mitochondrial (469 aa).

The N-terminal 30 residues, 1 to 30 (MSFLTVSRLAPKLLNSKNATYFLVAARNAS), are a transit peptide targeting the mitochondrion. Catalysis depends on residues His304 and His350. Oxaloacetate is bound at residue Arg359. Asp405 is a catalytic residue. Residues Arg431 and Arg451 each contribute to the oxaloacetate site.

Belongs to the citrate synthase family. In terms of assembly, homodimer.

The protein resides in the mitochondrion matrix. The enzyme catalyses oxaloacetate + acetyl-CoA + H2O = citrate + CoA + H(+). The protein operates within carbohydrate metabolism; tricarboxylic acid cycle; isocitrate from oxaloacetate: step 1/2. In terms of biological role, key enzyme of the Krebs tricarboxylic acid cycle which catalyzes the synthesis of citrate from acetyl coenzyme A and oxaloacetate. The chain is Citrate synthase, mitochondrial (cs) from Xiphias gladius (Swordfish).